We begin with the raw amino-acid sequence, 30 residues long: NADH-ubiquinone oxidoreductase 18 kDa subunit (30 aa).

Complex I is composed of about 45 different subunits.

Its subcellular location is the mitochondrion inner membrane. It carries out the reaction a ubiquinone + NADH + 5 H(+)(in) = a ubiquinol + NAD(+) + 4 H(+)(out). Its function is as follows. Transfer of electrons from NADH to the respiratory chain. The immediate electron acceptor for the enzyme is believed to be ubiquinone. The polypeptide is NADH-ubiquinone oxidoreductase 18 kDa subunit (Solanum tuberosum (Potato)).